Reading from the N-terminus, the 503-residue chain is MADIYPLGKTHTEELNEIIVESAKEIAEPDTTMIQKLIDEHNPEPLLKGVRYYMCENDIEKKRRTYYDAAGQQLVDDTKTNNRTSHAWHKLFVDQKTQYLVGEPVTFTSDNKTLLEYVNELADDDFDDILNETVKNMSNKGIEYWHPFVDEEGEFDYVIFPAEEMIVVYKDNTRRDILFALRYYSYKGIMGEETQKAELYTDTHVYYYEKIDGVYQMDYSYGENNPRPHMTKGGQAIGWGRVPIIPFKNNEEMVSDLKFYKDLIDNYDSITSSTMDSFSDFQQIVYVLKNYDGENPKEFTANLRYHSVIKVSGDGGVDTLRAEIPVDSAAKELERIQDELYKSAQAVDNSPETIGGGATGPALENLYALLDLKANMAERKIRAGLRLFFWFFAEYLRNTGKGDFNPDKELTMTFTRTRIQNDSEIVQSLVQGVTGGIMSKETAVARNPFVQDPEEELARIEEEMNQYAEMQGNLLDDEGGDDDLEEDDPNAGAAESGGAGQVS.

The interval 463 to 503 is disordered; the sequence is EMNQYAEMQGNLLDDEGGDDDLEEDDPNAGAAESGGAGQVS. A compositionally biased stretch (acidic residues) spans 475-489; sequence LDDEGGDDDLEEDDP.

It belongs to the SPP1-like portal protein family. As to quaternary structure, homododecamer. Has been seen as 13-mer and 14-mer multimer in experiments, but assembles as homododecamer in vivo. Interacts with the gp7 protein. Interacts with the connector proteins gp15; this interaction occurs at the end of the packaging when the terminase complex is replaced by the connector.

The protein resides in the virion. In terms of biological role, forms the portal vertex of the capsid. This portal plays critical roles in head assembly, genome packaging, neck/tail attachment, and genome ejection. The portal protein multimerizes as a single ring-shaped homododecamer arranged around a central channel. Binds to the terminase subunits to form the packaging machine. Necessary to ensure correct procapsid size during capsid assembly. Once the capsid is packaged with the DNA, the terminase complex is substituted by the connector proteins gp15. This is Portal protein (6) from Bacillus phage SPP1 (Bacteriophage SPP1).